Here is a 333-residue protein sequence, read N- to C-terminus: Probable 4-hydroxyproline 2-epimerase (333 aa).

Cysteine 90 serves as the catalytic Proton acceptor. Residues 91–92 (GH), histidine 223, and aspartate 249 each bind substrate. Residue cysteine 253 is the Proton donor of the active site. 254-255 (GT) provides a ligand contact to substrate.

It belongs to the proline racemase family.

The catalysed reaction is trans-4-hydroxy-L-proline = cis-4-hydroxy-D-proline. Its function is as follows. Likely catalyzes the epimerization of trans-4-hydroxy-L-proline (t4LHyp) to cis-4-hydroxy-D-proline (c4DHyp). May be involved in the degradation pathway that converts t4LHyp to alpha-ketoglutarate, which would allow R.meliloti to grow on t4LHyp as a sole carbon source. The chain is Probable 4-hydroxyproline 2-epimerase from Rhizobium meliloti (strain 1021) (Ensifer meliloti).